A 473-amino-acid polypeptide reads, in one-letter code: RUN domain-containing protein 3B (473 aa).

The segment at 1-24 (MASRSLGGLSGIRGGGGGGGKKSL) is disordered. Gly residues predominate over residues 8 to 21 (GLSGIRGGGGGGGK). An Omega-N-methylarginine modification is found at arginine 13. The RUN domain maps to 57–206 (DDSSPEFNNF…IDFSFCLKGE (150 aa)). Phosphoserine is present on residues serine 232 and serine 233. A coiled-coil region spans residues 317 to 342 (AHKLEKEQLEYIIVELQDQLTVLKNN). A compositionally biased stretch (polar residues) spans 399-422 (SLSQTSLDPGQSQEGDGKQDTLNV). Residues 399-428 (SLSQTSLDPGQSQEGDGKQDTLNVMSEGKE) form a disordered region.

The protein belongs to the RUNDC3 family. In terms of assembly, interacts with RAP2A. As to expression, isoform 2 is expressed at high levels in brain, thymus, ovary, testis, leukocyte, liver, small intestine and prostate. Isoform 1 is expressed in the brain, testis and adrenal gland. It is activated in tumorigenic breast cancer cell lines and in the primary tumor of breast cancer patients. Activation also correlates with metastatic lymph node invasion and can be detected in metastatic epithelial cells from the lymph nodes and in the bone marrow of patients.

The polypeptide is RUN domain-containing protein 3B (RUNDC3B) (Homo sapiens (Human)).